A 134-amino-acid chain; its full sequence is Prefoldin subunit alpha (134 aa).

This sequence belongs to the prefoldin subunit alpha family. As to quaternary structure, heterohexamer of two alpha and four beta subunits.

It localises to the cytoplasm. Molecular chaperone capable of stabilizing a range of proteins. Seems to fulfill an ATP-independent, HSP70-like function in archaeal de novo protein folding. This Pyrobaculum calidifontis (strain DSM 21063 / JCM 11548 / VA1) protein is Prefoldin subunit alpha.